Consider the following 343-residue polypeptide: Cytoplasmic tRNA 2-thiolation protein 1 (343 aa).

It belongs to the TtcA family. CTU1/NCS6/ATPBD3 subfamily.

Its subcellular location is the cytoplasm. Its pathway is tRNA modification; 5-methoxycarbonylmethyl-2-thiouridine-tRNA biosynthesis. Its function is as follows. Plays a central role in 2-thiolation of mcm(5)S(2)U at tRNA wobble positions of tRNA(Lys), tRNA(Glu) and tRNA(Gln). Directly binds tRNAs and probably acts by catalyzing adenylation of tRNAs, an intermediate required for 2-thiolation. It is unclear whether it acts as a sulfurtransferase that transfers sulfur from thiocarboxylated URM1 onto the uridine of tRNAs at wobble position. In Drosophila grimshawi (Hawaiian fruit fly), this protein is Cytoplasmic tRNA 2-thiolation protein 1.